Consider the following 131-residue polypeptide: Glycine cleavage system H protein (131 aa).

The Lipoyl-binding domain maps to 24–106 (IATLGISAFA…HGEGWLLKVR (83 aa)). N6-lipoyllysine is present on Lys65.

It belongs to the GcvH family. As to quaternary structure, the glycine cleavage system is composed of four proteins: P, T, L and H. The cofactor is (R)-lipoate.

The glycine cleavage system catalyzes the degradation of glycine. The H protein shuttles the methylamine group of glycine from the P protein to the T protein. The polypeptide is Glycine cleavage system H protein (Microcystis aeruginosa (strain NIES-843 / IAM M-2473)).